Consider the following 390-residue polypeptide: 8-demethyl-8-(2-methoxy-alpha-L-rhamnosyl)-tetracenomycin-C 3'-O-methyltransferase (390 aa).

Residues 202-208 (ELGIGGY), Ser-217, Asp-234, 252-253 (SQ), and Asp-275 contribute to the S-adenosyl-L-methionine site. Residue Asp-275 coordinates Mg(2+). Residue His-278 is the Proton acceptor of the active site. Positions 303 and 304 each coordinate Mg(2+).

Belongs to the methyltransferase OleY/MycE family. It depends on Mg(2+) as a cofactor.

The enzyme catalyses 8-demethyl-8-(2-O-methyl-alpha-L-rhamnosyl)-tetracenomycin C + S-adenosyl-L-methionine = 8-demethyl-8-(2,3-di-O-methyl-alpha-L-rhamnosyl)-tetracenomycin C + S-adenosyl-L-homocysteine + H(+). The protein operates within antibiotic biosynthesis. O-methyltransferase involved in the biosynthesis of the permethylated L-rhamnose moiety of elloramycin, an antitumor polyketide. Mediates the methylation of the hydroxy groups at the 3'-position after the sugar moiety has been attached to the aglycon. The protein is 8-demethyl-8-(2-methoxy-alpha-L-rhamnosyl)-tetracenomycin-C 3'-O-methyltransferase of Streptomyces olivaceus.